We begin with the raw amino-acid sequence, 299 residues long: MTTVNLAAYRFVSLDSIEQWRPLVAARCNTLGLRGTILLAPEGINLFIAGPREATDAFVDYIRHDPLFEGKFADLPFKESLSDSQPFRRMLVRLKREIITMKKPAIKPELGRAPSVDARTLKAWLDQGHDDAGRPVVMLDTRNAFEVDVGTFDRALDYRIDKFSEFPAVIEANRADLEGKTIVSFCTGGIRCEKAAIHMKDVGIENVYQLEGGILKYFEEVGGAHYHGDCFVFDYRTALNPQLAPTADVTCFACRAVVPADAQQSPLYVPGKCCPACHPGDSGTPGRRAEPGAEPARAV.

The 95-residue stretch at 132-226 (AGRPVVMLDT…YFEEVGGAHY (95 aa)) folds into the Rhodanese domain. C186 acts as the Cysteine persulfide intermediate in catalysis.

The protein belongs to the TrhO family.

It catalyses the reaction uridine(34) in tRNA + AH2 + O2 = 5-hydroxyuridine(34) in tRNA + A + H2O. In terms of biological role, catalyzes oxygen-dependent 5-hydroxyuridine (ho5U) modification at position 34 in tRNAs. The chain is tRNA uridine(34) hydroxylase from Burkholderia mallei (strain NCTC 10247).